We begin with the raw amino-acid sequence, 350 residues long: Heme A synthase (350 aa).

The next 8 membrane-spanning stretches (helical) occupy residues 14–34, 95–115, 125–145, 162–182, 202–222, 260–280, 296–316, and 317–337; these read VAIW…IGGF, YVHR…FIYF, VVIK…AGWY, LALH…QFFD, VGII…VAGL, VQFI…ILTV, IIQI…AIAI, and AHQV…CYLR. H264 serves as a coordination point for heme. H318 contacts heme.

It belongs to the COX15/CtaA family. Type 2 subfamily. Interacts with CtaB. It depends on heme b as a cofactor.

The protein localises to the cell membrane. It carries out the reaction Fe(II)-heme o + 2 A + H2O = Fe(II)-heme a + 2 AH2. It functions in the pathway porphyrin-containing compound metabolism; heme A biosynthesis; heme A from heme O: step 1/1. Its function is as follows. Catalyzes the conversion of heme O to heme A by two successive hydroxylations of the methyl group at C8. The first hydroxylation forms heme I, the second hydroxylation results in an unstable dihydroxymethyl group, which spontaneously dehydrates, resulting in the formyl group of heme A. This is Heme A synthase from Wolbachia pipientis wMel.